Reading from the N-terminus, the 163-residue chain is Putative protein CASTOR3P (163 aa).

This sequence belongs to the GATS family.

The sequence is that of Putative protein CASTOR3P from Homo sapiens (Human).